The primary structure comprises 290 residues: uncharacterized protein (290 aa).

Positions 30 to 274 constitute an AB hydrolase-1 domain; that stretch reads PTILLLHGFP…YDTGHFALET (245 aa). His269 is an active-site residue.

Belongs to the DmpD/TodF/XylF esterase family.

This is an uncharacterized protein from Saccharomyces cerevisiae (strain ATCC 204508 / S288c) (Baker's yeast).